Consider the following 1412-residue polypeptide: DNA-directed RNA polymerase subunit beta' (1412 aa).

Mg(2+) is bound by residues aspartate 543, aspartate 545, and aspartate 547. Zn(2+) is bound by residues cysteine 1017, cysteine 1092, cysteine 1099, and cysteine 1102.

It belongs to the RNA polymerase beta' chain family. The RNAP catalytic core consists of 2 alpha, 1 beta, 1 beta' and 1 omega subunit. When a sigma factor is associated with the core the holoenzyme is formed, which can initiate transcription. Mg(2+) serves as cofactor. It depends on Zn(2+) as a cofactor.

It carries out the reaction RNA(n) + a ribonucleoside 5'-triphosphate = RNA(n+1) + diphosphate. Functionally, DNA-dependent RNA polymerase catalyzes the transcription of DNA into RNA using the four ribonucleoside triphosphates as substrates. This is DNA-directed RNA polymerase subunit beta' from Mesomycoplasma hyopneumoniae (strain 7448) (Mycoplasma hyopneumoniae).